The sequence spans 191 residues: Cytochrome b-245 light chain (191 aa).

Over 2 to 7 (GQIEWA) the chain is Cytoplasmic. A helical membrane pass occupies residues 8–30 (MWANEQALASGLILITGGIVATA). At 31–35 (GQFTQ) the chain is on the extracellular side. The chain crosses the membrane as a helical span at residues 36 to 53 (WYLGAYSIAAGVLVCLLE). The Cytoplasmic portion of the chain corresponds to 54–69 (YPRGKRSKGSTMERCG). The stretch at 70–80 (QKYLTRVVKLF) is an intramembrane region. Over 81-86 (GPLTRN) the chain is Cytoplasmic. Residues 87-104 (YYIRAFLHLGLAVPAGFL) traverse the membrane as a helical segment. Leu-105 is a topological domain (extracellular). The chain crosses the membrane as a helical span at residues 106–126 (ATILGTACLAIASGIYLLAAI). Residues 127-191 (RGEQWSPIEP…NPMPVNDEVV (65 aa)) are Cytoplasmic-facing. Positions 134–191 (IEPKPKERPQIGGTIKQPPSNPPPRPPAEARKKLSEEAAGVPTGGPQENPMPVNDEVV) are disordered. Thr-147 carries the phosphothreonine modification. Residue Lys-149 forms a Glycyl lysine isopeptide (Lys-Gly) (interchain with G-Cter in ubiquitin) linkage. Ser-168 is subject to Phosphoserine.

It belongs to the p22phox family. As to quaternary structure, component of the phagocyte NADPH oxidase core complex/cytochrome b558 complex, composed of CYBB (heavy chain (beta)) and CYBA (light chain (alpha)). Component of the phagocyte NADPH oxidase complex composed of an obligatory core heterodimer formed by the membrane proteins CYBA and CYBB and the cytosolic regulatory subunits NCF1/p47-phox, NCF2/p67-phox, NCF4/p40-phox and the small GTPase RAC1 or RAC2. Interacts with NCF1 (via SH3 domain). Interacts with SH3PXD2A. Interacts with DUOX1, DUOX2 and TPO. Interacts with NOX4; this interaction mediates superoxide generation. Interacts with calprotectin (S100A8/9). Interacts with GBP7. Interacts with NOXO1. Forms a heterodimer with NOX3 and is essential for activity and cell membrane localization of NOX3. Interacts with NOX1. Phosphorylation at Thr-147 enhances NADPH oxidase activity by promoting NCF1/p47-phox binding. Post-translationally, ubiquitinated at Lys-149 likely by RNF145.

The protein localises to the cell membrane. Subunit of NADPH oxidase complexes that is required for the NADPH oxidase activity that generates, in various cell types, superoxide from molecular oxygen utilizing NADPH as an electron donor. Subunit of the phagocyte NADPH oxidase complex that mediates the transfer of electrons from cytosolic NADPH to O2 to produce the superoxide anion (O2(-)). In the activated complex, electrons are first transferred from NADPH to flavin adenine dinucleotide (FAD) and subsequently transferred via two heme molecules to molecular oxygen, producing superoxide through an outer-sphere reaction. Activation of the NADPH oxidase complex is initiated by the assembly of cytosolic subunits of the NADPH oxidase complex with the core NADPH oxidase complex to form a complex at the plasma membrane or phagosomal membrane. This activation process is initiated by phosphorylation dependent binding of the cytosolic NCF1/p47-phox subunit to the C-terminus of CYBA/p22-phox. Aassociates with NOX3 to form a functional NADPH oxidase constitutively generating superoxide. This Bison bison (American bison) protein is Cytochrome b-245 light chain.